A 243-amino-acid chain; its full sequence is 2,3-bisphosphoglycerate-dependent phosphoglycerate mutase (243 aa).

Substrate-binding positions include 8–15, 21–22, Arg-60, 87–90, Lys-98, 114–115, and 183–184; these read RHGQSEWN, TG, ERHY, RR, and GN. His-9 (tele-phosphohistidine intermediate) is an active-site residue. Glu-87 acts as the Proton donor/acceptor in catalysis.

Belongs to the phosphoglycerate mutase family. BPG-dependent PGAM subfamily. As to quaternary structure, homodimer.

The catalysed reaction is (2R)-2-phosphoglycerate = (2R)-3-phosphoglycerate. It functions in the pathway carbohydrate degradation; glycolysis; pyruvate from D-glyceraldehyde 3-phosphate: step 3/5. Its function is as follows. Catalyzes the interconversion of 2-phosphoglycerate and 3-phosphoglycerate. The polypeptide is 2,3-bisphosphoglycerate-dependent phosphoglycerate mutase (Maricaulis maris (strain MCS10) (Caulobacter maris)).